A 128-amino-acid polypeptide reads, in one-letter code: Transcription antitermination protein NusB (128 aa).

It belongs to the NusB family.

Involved in transcription antitermination. Required for transcription of ribosomal RNA (rRNA) genes. Binds specifically to the boxA antiterminator sequence of the ribosomal RNA (rrn) operons. This chain is Transcription antitermination protein NusB, found in Staphylococcus carnosus (strain TM300).